We begin with the raw amino-acid sequence, 963 residues long: Exportin-T (963 aa).

M1 bears the N-acetylmethionine mark. K635 is subject to N6-acetyllysine.

The protein belongs to the exportin family. In terms of assembly, found in a complex with XPOT, Ran and tRNA. Probably found in a complex with nucleoporins. Interacts with Ran and tRNA in a GTP-dependent manner.

The protein localises to the nucleus. It localises to the cytoplasm. Functionally, mediates the nuclear export of aminoacylated tRNAs. In the nucleus binds to tRNA and to the GTPase Ran in its active GTP-bound form. Docking of this trimeric complex to the nuclear pore complex (NPC) is mediated through binding to nucleoporins. Upon transit of a nuclear export complex into the cytoplasm, disassembling of the complex and hydrolysis of Ran-GTP to Ran-GDP (induced by RANBP1 and RANGAP1, respectively) cause release of the tRNA from the export receptor. XPOT then return to the nuclear compartment and mediate another round of transport. The directionality of nuclear export is thought to be conferred by an asymmetric distribution of the GTP- and GDP-bound forms of Ran between the cytoplasm and nucleus. This chain is Exportin-T (Xpot), found in Mus musculus (Mouse).